We begin with the raw amino-acid sequence, 160 residues long: Dysbindin domain-containing protein 1 (160 aa).

Phosphoserine occurs at positions 3, 97, and 121. A disordered region spans residues A95 to D160. Residues T127–R143 show a composition bias toward basic and acidic residues.

The protein belongs to the dysbindin family.

This Mus musculus (Mouse) protein is Dysbindin domain-containing protein 1 (Dbndd1).